Here is a 325-residue protein sequence, read N- to C-terminus: Probable cell division protein WhiA (325 aa).

A DNA-binding region (H-T-H motif) is located at residues 280–313; the sequence is SLKELGNMLEKPLGKSGVNHRLRKIDKIAEELRK.

Belongs to the WhiA family.

Involved in cell division and chromosome segregation. The sequence is that of Probable cell division protein WhiA from Caldicellulosiruptor bescii (strain ATCC BAA-1888 / DSM 6725 / KCTC 15123 / Z-1320) (Anaerocellum thermophilum).